The primary structure comprises 235 residues: Endonuclease V (235 aa).

Asp-45 and Asp-115 together coordinate Mg(2+).

This sequence belongs to the endonuclease V family. It depends on Mg(2+) as a cofactor.

Its subcellular location is the cytoplasm. The catalysed reaction is Endonucleolytic cleavage at apurinic or apyrimidinic sites to products with a 5'-phosphate.. In terms of biological role, DNA repair enzyme involved in the repair of deaminated bases. Selectively cleaves double-stranded DNA at the second phosphodiester bond 3' to a deoxyinosine leaving behind the intact lesion on the nicked DNA. This Bacillus thuringiensis subsp. konkukian (strain 97-27) protein is Endonuclease V.